The following is a 1006-amino-acid chain: Probable sulfite reductase [NADPH] flavoprotein component (1006 aa).

The FAD-binding FR-type domain maps to 622–852 (EKVFTVHVRA…AVKTSVMKLP (231 aa)). FAD contacts are provided by residues 658 to 669 (YDIGEALGVYGV) and 788 to 798 (IKRREYSISSS).

Requires FAD as cofactor. The cofactor is FMN.

The catalysed reaction is hydrogen sulfide + 3 NADP(+) + 3 H2O = sulfite + 3 NADPH + 4 H(+). The protein operates within sulfur metabolism; hydrogen sulfide biosynthesis; hydrogen sulfide from sulfite (NADPH route): step 1/1. This enzyme catalyzes the 6-electron reduction of sulfite to sulfide. This is one of several activities required for the biosynthesis of L-cysteine from sulfate. This is Probable sulfite reductase [NADPH] flavoprotein component from Schizosaccharomyces pombe (strain 972 / ATCC 24843) (Fission yeast).